A 253-amino-acid chain; its full sequence is LexA repressor (253 aa).

The segment at residues Phe-26–Ser-46 is a DNA-binding region (H-T-H motif). The tract at residues Met-73–Glu-97 is disordered. Residues Ser-174 and Lys-212 each act as for autocatalytic cleavage activity in the active site.

The protein belongs to the peptidase S24 family. As to quaternary structure, homodimer.

The enzyme catalyses Hydrolysis of Ala-|-Gly bond in repressor LexA.. Represses a number of genes involved in the response to DNA damage (SOS response), including recA and lexA. In the presence of single-stranded DNA, RecA interacts with LexA causing an autocatalytic cleavage which disrupts the DNA-binding part of LexA, leading to derepression of the SOS regulon and eventually DNA repair. This chain is LexA repressor, found in Gluconacetobacter diazotrophicus (strain ATCC 49037 / DSM 5601 / CCUG 37298 / CIP 103539 / LMG 7603 / PAl5).